The primary structure comprises 276 residues: Arginine and glutamate-rich protein 1 (276 aa).

2 stretches are compositionally biased toward basic residues: residues 1–30 (MGRS…RSRS) and 38–59 (ARKR…RSRS). The necessary and sufficient for RNA binding stretch occupies residues 1-77 (MGRSRSRSSS…RRDRERERER (77 aa)). Positions 1–117 (MGRSRSRSSS…EKKAEFERQR (117 aa)) are disordered. Basic and acidic residues-rich tracts occupy residues 67–87 (SRRD…RIDI) and 96–117 (SSLD…ERQR). The necessary and sufficient for transcriptional regulation stretch occupies residues 78–276 (ASSPPDRIDI…KLSFSLKSQD (199 aa)). Residues 175 to 179 (LLEEL) carry the LXXLL motif 1; degenerate motif. The short motif at 204–208 (LERIL) is the LXXLL motif 2; degenerate element. Positions 240–256 (RMKLEQERQRQQKEEQK) are enriched in basic and acidic residues. The tract at residues 240-276 (RMKLEQERQRQQKEEQKIILGKGKSRPKLSFSLKSQD) is disordered.

This sequence belongs to the ARGLU1 family.

It localises to the nucleus. The protein localises to the nucleus speckle. Its subcellular location is the chromosome. Functionally, dual function regulator of gene expression; regulator of transcription and modulator of alternative splicing. General coactivator of nuclear receptor-induced gene expression. The polypeptide is Arginine and glutamate-rich protein 1 (ARGLU1) (Gallus gallus (Chicken)).